We begin with the raw amino-acid sequence, 450 residues long: Cell division cycle 20.5, cofactor of APC complex (450 aa).

WD repeat units lie at residues 129–166 (ADDF…TYKL), 171–210 (EEEG…QVRT), 214–251 (GHES…SIVE), 255–294 (GHTE…SSNP), 304–346 (EHTA…CLNS), 348–389 (ETGS…KMAE), and 392–431 (GHTS…PKTT).

Belongs to the WD repeat CDC20/Fizzy family. As to quaternary structure, the APC/C is composed of at least 11 subunits that stay tightly associated throughout the cell cycle. Binds to GIG1 and PYM. Part of the mitotic checkpoint complex (MCC); interacts with MAD2 and BUB1.

It localises to the nucleus. It participates in protein modification; protein ubiquitination. In terms of biological role, component of the anaphase promoting complex/cyclosome (APC/C), a cell cycle-regulated E3 ubiquitin-protein ligase complex that controls progression through mitosis and the G1 phase of the cell cycle. This Arabidopsis thaliana (Mouse-ear cress) protein is Cell division cycle 20.5, cofactor of APC complex (CDC20-5).